The sequence spans 202 residues: Na(+)-translocating NADH-quinone reductase subunit E (202 aa).

Helical transmembrane passes span 11 to 31 (AVFVENMALAFFLGMCTFIAI), 35 to 55 (VETAIGLGIAVIVVQTITVPA), 81 to 101 (FLGLLSYIGVIAAIVQILEML), 114 to 134 (GVFLPLITVNCAIMAGSLFMV), 144 to 164 (TVYGVGSGFSWALAIAALAGI), and 180 to 200 (LGITFITIGLMSLGFMSFSGV).

Belongs to the NqrDE/RnfAE family. Composed of six subunits; NqrA, NqrB, NqrC, NqrD, NqrE and NqrF.

The protein localises to the cell inner membrane. It carries out the reaction a ubiquinone + n Na(+)(in) + NADH + H(+) = a ubiquinol + n Na(+)(out) + NAD(+). Functionally, NQR complex catalyzes the reduction of ubiquinone-1 to ubiquinol by two successive reactions, coupled with the transport of Na(+) ions from the cytoplasm to the periplasm. NqrA to NqrE are probably involved in the second step, the conversion of ubisemiquinone to ubiquinol. This chain is Na(+)-translocating NADH-quinone reductase subunit E, found in Pseudomonas aeruginosa (strain LESB58).